The chain runs to 149 residues: Putative pre-16S rRNA nuclease (149 aa).

Belongs to the YqgF nuclease family.

It localises to the cytoplasm. Its function is as follows. Could be a nuclease involved in processing of the 5'-end of pre-16S rRNA. This Heliobacterium modesticaldum (strain ATCC 51547 / Ice1) protein is Putative pre-16S rRNA nuclease.